A 343-amino-acid polypeptide reads, in one-letter code: MARAPGGVRRRSGRRGAGGGGAGGGGEALRKGPWMAEEDEVLLEHVRTHGPMDWSSIRSKGLLPRTGKSCRLRWVNKLRPNLKSGCKFTAEEERVVIELQAQFGNKWARIATYLQGRTDNDVKNFWSTRQKRLARLLRGPLPAARPNKHNSGKGKAPSSSSLDSQTATFHQSSASLDQASLEGNSLGWQCREAAPFMGYDQACSGFFAFEGPLPLQLLPPADGEASSSNAAQSAPPPLLFDQPPYPLINFPGWPERYVDVGHGFVDAGAMDGLAYQELLPMVQSVPMIMPFFGMECAHDAVKHGAFDDLPPNMFDDAVDQPPPPPPPPPPPSPSPSPSRDDVL.

A disordered region spans residues Met-1–Arg-30. Positions Arg-15 to Glu-27 are enriched in gly residues. 2 HTH myb-type domains span residues Gly-26–Leu-78 and Arg-79–Ala-134. 2 consecutive DNA-binding regions (H-T-H motif) follow at residues Trp-54–Lys-77 and Trp-107–Gln-130. 3 disordered regions span residues Leu-137–Phe-169, Pro-219–Leu-238, and Asp-307–Leu-343. A compositionally biased stretch (polar residues) spans Pro-157 to Phe-169. Residues Gln-320–Ser-336 show a composition bias toward pro residues.

The protein resides in the nucleus. Functionally, probable transcription factor. The chain is Probable transcription factor MYB58 from Oryza sativa subsp. japonica (Rice).